A 527-amino-acid polypeptide reads, in one-letter code: Putative WEB family protein At4g17210 (527 aa).

Disordered regions lie at residues 1–28 (MAKI…IDTR) and 46–70 (FSKK…TDVS). The span at 55–68 (SSSSSSQSQDTTTD) shows a compositional bias: low complexity. Coiled coils occupy residues 95–159 (AAKA…YILI), 202–389 (SNKI…AKHM), and 436–513 (KKIR…EAHS).

This sequence belongs to the WEB family.

This Arabidopsis thaliana (Mouse-ear cress) protein is Putative WEB family protein At4g17210.